A 358-amino-acid chain; its full sequence is Alanine racemase (358 aa).

Lysine 35 (proton acceptor; specific for D-alanine) is an active-site residue. Lysine 35 carries the N6-(pyridoxal phosphate)lysine modification. Arginine 130 lines the substrate pocket. Catalysis depends on tyrosine 255, which acts as the Proton acceptor; specific for L-alanine. Methionine 303 contacts substrate.

It belongs to the alanine racemase family. Requires pyridoxal 5'-phosphate as cofactor.

The catalysed reaction is L-alanine = D-alanine. It functions in the pathway amino-acid biosynthesis; D-alanine biosynthesis; D-alanine from L-alanine: step 1/1. Catalyzes the interconversion of L-alanine and D-alanine. May also act on other amino acids. The sequence is that of Alanine racemase (alr) from Shewanella baltica (strain OS195).